Consider the following 226-residue polypeptide: HTH-type transcriptional regulator Rv0324 (226 aa).

One can recognise an HTH arsR-type domain in the interval 7–101 (RKAALLDQVA…LVQVVADEHL (95 aa)). Positions 41–64 (VEAIATATGMNLTTASANLQALKS) form a DNA-binding region, H-T-H motif. One can recognise a Rhodanese domain in the interval 129-218 (EAGEVTLVDV…WRLAGLPVDE (90 aa)). The Cysteine persulfide intermediate role is filled by Cys177.

Part of a regulatory network that coordinates tolerance to the antitubercular drug bedaquiline. This Mycobacterium tuberculosis (strain ATCC 25618 / H37Rv) protein is HTH-type transcriptional regulator Rv0324.